The sequence spans 466 residues: UDP-N-acetylmuramoylalanine--D-glutamate ligase (466 aa).

121–127 (GTNGKST) is a binding site for ATP.

Belongs to the MurCDEF family.

Its subcellular location is the cytoplasm. It carries out the reaction UDP-N-acetyl-alpha-D-muramoyl-L-alanine + D-glutamate + ATP = UDP-N-acetyl-alpha-D-muramoyl-L-alanyl-D-glutamate + ADP + phosphate + H(+). Its pathway is cell wall biogenesis; peptidoglycan biosynthesis. In terms of biological role, cell wall formation. Catalyzes the addition of glutamate to the nucleotide precursor UDP-N-acetylmuramoyl-L-alanine (UMA). The chain is UDP-N-acetylmuramoylalanine--D-glutamate ligase from Nitrobacter winogradskyi (strain ATCC 25391 / DSM 10237 / CIP 104748 / NCIMB 11846 / Nb-255).